The primary structure comprises 143 residues: Large-conductance mechanosensitive channel (143 aa).

Transmembrane regions (helical) follow at residues 19–39 (VGVI…GDLI) and 81–101 (GSFL…FGVI).

This sequence belongs to the MscL family. As to quaternary structure, homopentamer.

Its subcellular location is the cell inner membrane. Its function is as follows. Channel that opens in response to stretch forces in the membrane lipid bilayer. May participate in the regulation of osmotic pressure changes within the cell. This Rhodopseudomonas palustris (strain BisB5) protein is Large-conductance mechanosensitive channel.